The primary structure comprises 98 residues: NADH-ubiquinone oxidoreductase chain 4L (98 aa).

The next 3 helical transmembrane spans lie at 1 to 21 (MPYIYMNITLAFVISLIGTLM), 29 to 49 (SLLCLEGMMLSLFTLNALLSL), and 61 to 81 (LILLVFAACEAAVGLALLVMI).

It belongs to the complex I subunit 4L family. Core subunit of respiratory chain NADH dehydrogenase (Complex I) which is composed of 45 different subunits.

Its subcellular location is the mitochondrion inner membrane. It carries out the reaction a ubiquinone + NADH + 5 H(+)(in) = a ubiquinol + NAD(+) + 4 H(+)(out). Its function is as follows. Core subunit of the mitochondrial membrane respiratory chain NADH dehydrogenase (Complex I) which catalyzes electron transfer from NADH through the respiratory chain, using ubiquinone as an electron acceptor. Part of the enzyme membrane arm which is embedded in the lipid bilayer and involved in proton translocation. The chain is NADH-ubiquinone oxidoreductase chain 4L (MT-ND4L) from Loxodonta africana (African elephant).